The chain runs to 759 residues: MTEPITPEIVAQHGLKPEEYQRILEHLGRTPTLTELGVFSVMWSEHCSYKSSRVHLKTFPTSGPRVLQGPGENAGVVDLGDGLAAAFKMESHNHPSYIEPYQGAATGVGGILRDVFTMGARPIASLNALRFGDPSHPRTAYLLEGVVAGIGGYGNCMGVPTVGGEVAFHPSYNGNCLVNAFTLGILPADKIFRGTAAGVGNPVMYVGAKTGRDGIHGATMASAEFDASTEEKRPTVQVGDPFMEKLLLEACLELFQTDAVVGIQDMGAAGLTSSSVEMAGRGGNGLDLFLDQVPLREEGMTPYEILLSESQERMLLVAAEGKEELVRSICEKWDLDVAVIGRVTASGRWRAHWRGAVVADLPVDPLTEGAPKYHRPMAPHPALPALHAFDAAALPEPADLGAALLRLLARPTIASKEWVYRQYDHMVRLVGAVRPGGDAAVVRLAVSHDAHAHKGIALSVGVNGRFCFLDPYLGAMHAVAECARNIACVGGEPIAITDCLNFGNPEKPEIMWQFAECVRGIGDACRAFGTPVVSGNVSLYNETEGQGILPTPTVGMVGLVEPVERTCHSTFRDAGDVIALVGSLQGEVGGSEYLSAEHGKEAGRPPALDLAREKAVQETVRRAVRAGLLSSAHDCSEGGLAVALAESCMMHEVPADGSKPAWIGCAVRIPFPVRKDFVLFGEDASRILVSLPKENAARFVDLAQQCGAPVIRLGAVGGDRLEIQGALSVPVEDLARAWRDGIPAVLRRDAAHAGTTAPA.

The active site involves H46. Residues Y49 and K88 each contribute to the ATP site. E90 contributes to the Mg(2+) binding site. Substrate contacts are provided by residues 91-94 (SHNH) and R113. H92 functions as the Proton acceptor in the catalytic mechanism. Position 114 (D114) interacts with Mg(2+). Q237 lines the substrate pocket. Residue D265 coordinates Mg(2+). A substrate-binding site is contributed by 309-311 (ESQ). Positions 498 and 535 each coordinate ATP. N536 contributes to the Mg(2+) binding site. S538 is a binding site for substrate.

It belongs to the FGAMS family. As to quaternary structure, monomer. Part of the FGAM synthase complex composed of 1 PurL, 1 PurQ and 2 PurS subunits.

Its subcellular location is the cytoplasm. The catalysed reaction is N(2)-formyl-N(1)-(5-phospho-beta-D-ribosyl)glycinamide + L-glutamine + ATP + H2O = 2-formamido-N(1)-(5-O-phospho-beta-D-ribosyl)acetamidine + L-glutamate + ADP + phosphate + H(+). It functions in the pathway purine metabolism; IMP biosynthesis via de novo pathway; 5-amino-1-(5-phospho-D-ribosyl)imidazole from N(2)-formyl-N(1)-(5-phospho-D-ribosyl)glycinamide: step 1/2. Part of the phosphoribosylformylglycinamidine synthase complex involved in the purines biosynthetic pathway. Catalyzes the ATP-dependent conversion of formylglycinamide ribonucleotide (FGAR) and glutamine to yield formylglycinamidine ribonucleotide (FGAM) and glutamate. The FGAM synthase complex is composed of three subunits. PurQ produces an ammonia molecule by converting glutamine to glutamate. PurL transfers the ammonia molecule to FGAR to form FGAM in an ATP-dependent manner. PurS interacts with PurQ and PurL and is thought to assist in the transfer of the ammonia molecule from PurQ to PurL. This is Phosphoribosylformylglycinamidine synthase subunit PurL from Anaeromyxobacter dehalogenans (strain 2CP-1 / ATCC BAA-258).